The primary structure comprises 185 residues: Elongation factor P (185 aa).

This sequence belongs to the elongation factor P family.

The protein resides in the cytoplasm. It functions in the pathway protein biosynthesis; polypeptide chain elongation. Functionally, involved in peptide bond synthesis. Stimulates efficient translation and peptide-bond synthesis on native or reconstituted 70S ribosomes in vitro. Probably functions indirectly by altering the affinity of the ribosome for aminoacyl-tRNA, thus increasing their reactivity as acceptors for peptidyl transferase. The chain is Elongation factor P from Caldicellulosiruptor bescii (strain ATCC BAA-1888 / DSM 6725 / KCTC 15123 / Z-1320) (Anaerocellum thermophilum).